The primary structure comprises 71 residues: Small ribosomal subunit protein bS18 (71 aa).

It belongs to the bacterial ribosomal protein bS18 family. In terms of assembly, part of the 30S ribosomal subunit. Forms a tight heterodimer with protein bS6.

Binds as a heterodimer with protein bS6 to the central domain of the 16S rRNA, where it helps stabilize the platform of the 30S subunit. The chain is Small ribosomal subunit protein bS18 from Synechococcus elongatus (strain ATCC 33912 / PCC 7942 / FACHB-805) (Anacystis nidulans R2).